Consider the following 343-residue polypeptide: tRNA N6-adenosine threonylcarbamoyltransferase (343 aa).

Fe cation contacts are provided by His114 and His118. Residues 137–141 (LVSGG), Asp171, Gly184, Asp188, and Asn278 contribute to the substrate site. Residue Asp306 participates in Fe cation binding.

Belongs to the KAE1 / TsaD family. Requires Fe(2+) as cofactor.

Its subcellular location is the cytoplasm. The enzyme catalyses L-threonylcarbamoyladenylate + adenosine(37) in tRNA = N(6)-L-threonylcarbamoyladenosine(37) in tRNA + AMP + H(+). Required for the formation of a threonylcarbamoyl group on adenosine at position 37 (t(6)A37) in tRNAs that read codons beginning with adenine. Is involved in the transfer of the threonylcarbamoyl moiety of threonylcarbamoyl-AMP (TC-AMP) to the N6 group of A37, together with TsaE and TsaB. TsaD likely plays a direct catalytic role in this reaction. This Acidothermus cellulolyticus (strain ATCC 43068 / DSM 8971 / 11B) protein is tRNA N6-adenosine threonylcarbamoyltransferase.